The sequence spans 403 residues: Double C2-like domain-containing protein alpha (403 aa).

The tract at residues 1–92 (MRGRRGDRMT…DSYDSDDTTA (92 aa)) is interaction with UNC13D and DYNLT1. 2 C2 domains span residues 92 to 214 (ALGT…HFNI) and 254 to 387 (ERGR…ERWH). The Ca(2+) site is built by D123, D129, D184, D186, D285, D291, D345, D347, and D353. Residues 218–403 (RQVPLPSPSS…PPAAGALPLA (186 aa)) form an interaction with UNC13D region.

In terms of assembly, interacts (via N-terminus) with UNC13A. Interacts with cytoplasmic dynein light chain DYNLT1. Interacts with UNC13D. Ca(2+) is required as a cofactor. As to expression, predominantly expressed in brain. Also found in non-neural tissues. Expressed in RBL-2H3 mast cell line.

It localises to the cytoplasmic vesicle. The protein localises to the secretory vesicle. It is found in the synaptic vesicle membrane. The protein resides in the synapse. Its subcellular location is the synaptosome. It localises to the lysosome. Its function is as follows. Calcium sensor which most probably regulates fusion of vesicles with membranes. Binds calcium and phospholipids. May be involved in calcium dependent neurotransmitter release through the interaction with UNC13A. May be involved in calcium-dependent spontaneous release of neurotransmitter in absence of action potentials in neuronal cells. Regulates Ca(2+)-dependent secretory lysosome exocytosis in mast cells. This chain is Double C2-like domain-containing protein alpha (Doc2a), found in Rattus norvegicus (Rat).